The sequence spans 237 residues: Mannose-specific lectin alpha chain (237 aa).

Glu8 and Asp10 together coordinate Mn(2+). Ca(2+) contacts are provided by Asp10, Tyr12, Asn14, and Asp19. A carbohydrate is bound at residue Tyr12. Positions 19, 24, and 34 each coordinate Mn(2+). 99 to 100 (LY) is an a carbohydrate binding site. Asp208 lines the Ca(2+) pocket. Arg228 is a binding site for a carbohydrate.

It belongs to the leguminous lectin family. As to quaternary structure, homotetramer. Post-translationally, the beta and gamma chains are produced by partial proteolytic processing of the lectin alpha chain by an asparaginyl endopeptidase.

In terms of biological role, D-mannose/D-glucose-binding lectin. Also binds derivatives of glucose and mannose such as more complex glycans. The chain is Mannose-specific lectin alpha chain from Cymbosema roseum (Dioclea purpurea).